We begin with the raw amino-acid sequence, 262 residues long: Octopine permease ATP-binding protein P (262 aa).

One can recognise an ABC transporter domain in the interval 9–254; that stretch reads VKLTGIRKNF…PRTERFRQFL (246 aa). Residue 41 to 48 participates in ATP binding; it reads GSSGSGKS.

Belongs to the ABC transporter superfamily.

The protein resides in the cell inner membrane. Its function is as follows. Component of the octopine active transport system probably consisting of four subunits: Q, M, P and T. The polypeptide is Octopine permease ATP-binding protein P (occP) (Rhizobium meliloti (Ensifer meliloti)).